We begin with the raw amino-acid sequence, 416 residues long: MNKQSWLLNLSLLKTHPAFRAVFLARFISIVSLGLLGVAVPVQIQMMTHSTWQVGLSVTLTGGAMFVGLMVGGVLADRYERKKVILLARGTCGIGFIGLCLNALLPEPSLLAIYLLGLWDGFFASLGVTALLAATPALVGRENLMQAGAITMLTVRLGSVISPMIGGLLLATGGVAWNYGLAAAGTFITLLPLLSLPALPPPPQPREHPLKSLLAGFRFLLASPLVGGIALLGGLLTMASAVRVLYPALADNWQMSAAQIGFLYAAIPLGAAIGALTSGKLAHSVRPGLLMLLSTLGAFLAIGLFGLMPMWILGVVCLALFGWLSAVSSLLQYTMLQTQTPEAMLGRINGLWTAQNVTGDAIGAALLGGLGAMMTPVASASASGFGLLIIGVLLLLVLVELRRFRQTPPQVTASDS.

Over 1–21 the chain is Cytoplasmic; sequence MNKQSWLLNLSLLKTHPAFRA. The chain crosses the membrane as a helical span at residues 22 to 42; it reads VFLARFISIVSLGLLGVAVPV. Residues 43–55 lie on the Periplasmic side of the membrane; the sequence is QIQMMTHSTWQVG. A helical membrane pass occupies residues 56–76; that stretch reads LSVTLTGGAMFVGLMVGGVLA. The Cytoplasmic portion of the chain corresponds to 77–83; that stretch reads DRYERKK. Residues 84-104 traverse the membrane as a helical segment; it reads VILLARGTCGIGFIGLCLNAL. The Periplasmic segment spans residues 105-109; that stretch reads LPEPS. The helical transmembrane segment at 110–130 threads the bilayer; sequence LLAIYLLGLWDGFFASLGVTA. The Cytoplasmic portion of the chain corresponds to 131-156; the sequence is LLAATPALVGRENLMQAGAITMLTVR. The chain crosses the membrane as a helical span at residues 157-177; sequence LGSVISPMIGGLLLATGGVAW. A topological domain (periplasmic) is located at residue Asn178. The chain crosses the membrane as a helical span at residues 179–199; the sequence is YGLAAAGTFITLLPLLSLPAL. Residues 200–218 are Cytoplasmic-facing; that stretch reads PPPPQPREHPLKSLLAGFR. Residues 219 to 239 traverse the membrane as a helical segment; sequence FLLASPLVGGIALLGGLLTMA. At 240-256 the chain is on the periplasmic side; the sequence is SAVRVLYPALADNWQMS. Residues 257–277 traverse the membrane as a helical segment; that stretch reads AAQIGFLYAAIPLGAAIGALT. Topologically, residues 278 to 287 are cytoplasmic; sequence SGKLAHSVRP. The helical transmembrane segment at 288–307 threads the bilayer; sequence GLLMLLSTLGAFLAIGLFGL. At 308 to 313 the chain is on the periplasmic side; it reads MPMWIL. The helical transmembrane segment at 314–336 threads the bilayer; sequence GVVCLALFGWLSAVSSLLQYTML. At 337 to 356 the chain is on the cytoplasmic side; it reads QTQTPEAMLGRINGLWTAQN. Residues 357 to 377 form a helical membrane-spanning segment; the sequence is VTGDAIGAALLGGLGAMMTPV. Residue Ala378 is a topological domain, periplasmic. The helical transmembrane segment at 379–399 threads the bilayer; sequence SASASGFGLLIIGVLLLLVLV. At 400–416 the chain is on the cytoplasmic side; that stretch reads ELRRFRQTPPQVTASDS.

The protein belongs to the major facilitator superfamily. EntS (TC 2.A.1.38) family.

The protein resides in the cell inner membrane. Component of an export pathway for enterobactin. The protein is Enterobactin exporter EntS of Escherichia coli O6:H1 (strain CFT073 / ATCC 700928 / UPEC).